We begin with the raw amino-acid sequence, 164 residues long: C-phycoerythrin alpha chain (164 aa).

Residues Cys82 and Cys139 each contribute to the (2R,3E)-phycoerythrobilin site.

The protein belongs to the phycobiliprotein family. As to quaternary structure, heterodimer of an alpha and a beta chain. Contains two covalently linked bilin chromophores.

The protein localises to the cellular thylakoid membrane. Functionally, light-harvesting photosynthetic bile pigment-protein from the phycobiliprotein complex. The chain is C-phycoerythrin alpha chain (cpeA) from Microchaete diplosiphon (Fremyella diplosiphon).